The primary structure comprises 707 residues: Heat shock protein hsp88 (707 aa).

The segment covering 662-692 has biased composition (basic and acidic residues); that stretch reads EAEKAAKKAEEEARKAKEAAEKAAQEGAKDD. A disordered region spans residues 662-707; that stretch reads EAEKAAKKAEEEARKAKEAAEKAAQEGAKDDEMTDADAPKPVVEEA.

It belongs to the heat shock protein 70 family. In terms of assembly, binds hsp30 independent of temperature or substrate. The N-terminus is blocked.

The protein resides in the cytoplasm. The chain is Heat shock protein hsp88 (hsp88) from Neurospora crassa (strain ATCC 24698 / 74-OR23-1A / CBS 708.71 / DSM 1257 / FGSC 987).